A 235-amino-acid chain; its full sequence is Hydroxyacylglutathione hydrolase (235 aa).

Residues histidine 53, histidine 55, aspartate 57, histidine 58, histidine 109, aspartate 127, and histidine 165 each contribute to the Zn(2+) site.

It belongs to the metallo-beta-lactamase superfamily. Glyoxalase II family. Monomer. Requires Zn(2+) as cofactor.

The catalysed reaction is an S-(2-hydroxyacyl)glutathione + H2O = a 2-hydroxy carboxylate + glutathione + H(+). It participates in secondary metabolite metabolism; methylglyoxal degradation; (R)-lactate from methylglyoxal: step 2/2. Its function is as follows. Thiolesterase that catalyzes the hydrolysis of S-D-lactoyl-glutathione to form glutathione and D-lactic acid. This chain is Hydroxyacylglutathione hydrolase, found in Actinobacillus pleuropneumoniae serotype 7 (strain AP76).